A 59-amino-acid polypeptide reads, in one-letter code: Large ribosomal subunit protein uL30 (59 aa).

It belongs to the universal ribosomal protein uL30 family. As to quaternary structure, part of the 50S ribosomal subunit.

The protein is Large ribosomal subunit protein uL30 of Buchnera aphidicola subsp. Acyrthosiphon kondoi (Acyrthosiphon kondoi symbiotic bacterium).